The primary structure comprises 92 residues: Putative septation protein SpoVG (92 aa).

The protein belongs to the SpoVG family.

Its function is as follows. Could be involved in septation. The polypeptide is Putative septation protein SpoVG (Clostridioides difficile (strain 630) (Peptoclostridium difficile)).